The sequence spans 261 residues: Putative hydro-lyase SH0274 (261 aa).

It belongs to the D-glutamate cyclase family.

This is Putative hydro-lyase SH0274 from Staphylococcus haemolyticus (strain JCSC1435).